The primary structure comprises 153 residues: Endoribonuclease YbeY (153 aa).

Zn(2+) is bound by residues H118, H122, and H128.

It belongs to the endoribonuclease YbeY family. Requires Zn(2+) as cofactor.

It localises to the cytoplasm. Single strand-specific metallo-endoribonuclease involved in late-stage 70S ribosome quality control and in maturation of the 3' terminus of the 16S rRNA. The protein is Endoribonuclease YbeY of Chloroflexus aggregans (strain MD-66 / DSM 9485).